We begin with the raw amino-acid sequence, 269 residues long: Type III pantothenate kinase (269 aa).

ATP is bound at residue 9–16; it reads DVGNTSVK. Substrate contacts are provided by residues Y106 and 113 to 116; that span reads GADR. The Proton acceptor role is filled by D115. Position 137 (D137) interacts with K(+). T140 serves as a coordination point for ATP. Position 193 (T193) interacts with substrate.

The protein belongs to the type III pantothenate kinase family. Homodimer. NH4(+) serves as cofactor. It depends on K(+) as a cofactor.

The protein resides in the cytoplasm. The enzyme catalyses (R)-pantothenate + ATP = (R)-4'-phosphopantothenate + ADP + H(+). It participates in cofactor biosynthesis; coenzyme A biosynthesis; CoA from (R)-pantothenate: step 1/5. Functionally, catalyzes the phosphorylation of pantothenate (Pan), the first step in CoA biosynthesis. The chain is Type III pantothenate kinase from Lawsonia intracellularis (strain PHE/MN1-00).